We begin with the raw amino-acid sequence, 1008 residues long: Pre-mRNA-splicing factor SNU114 (1008 aa).

Ser-85 carries the post-translational modification Phosphoserine. The residue at position 88 (Thr-88) is a Phosphothreonine. The tr-type G domain maps to 131-338; it reads ERIINVGVIG…SYYYAHSIPS (208 aa). A G1 region spans residues 140–147; that stretch reads GPLHSGKT. 140–147 is a GTP binding site; that stretch reads GPLHSGKT. Residues 188-192 are G2; sequence GLSIK. The G3 stretch occupies residues 214 to 217; that stretch reads DAPG. Residues 214 to 218 and 268 to 271 each bind GTP; these read DAPGH and NKLD. A G4 region spans residues 268 to 271; the sequence is NKLD. Residues 315-317 are G5; sequence STK. Positions 504 to 536 are disordered; the sequence is TSQSESRQKRQLHDISKTETSNEDEDEDDETPS. Residues 509–520 are compositionally biased toward basic and acidic residues; it reads SRQKRQLHDISK. Over residues 524–536 the composition is skewed to acidic residues; it reads SNEDEDEDDETPS.

The protein belongs to the TRAFAC class translation factor GTPase superfamily. Classic translation factor GTPase family. EF-G/EF-2 subfamily. Belongs to the CWC complex (or CEF1-associated complex), a spliceosome sub-complex reminiscent of a late-stage spliceosome composed of the U2, U5 and U6 snRNAs and at least BUD13, BUD31, BRR2, CDC40, CEF1, CLF1, CUS1, CWC2, CWC15, CWC21, CWC22, CWC23, CWC24, CWC25, CWC27, ECM2, HSH155, IST3, ISY1, LEA1, MSL1, NTC20, PRP8, PRP9, PRP11, PRP19, PRP21, PRP22, PRP45, PRP46, SLU7, SMB1, SMD1, SMD2, SMD3, SMX2, SMX3, SNT309, SNU114, SPP2, SYF1, SYF2, RSE1 and YJU2. Component of the U4/U6-U5 tri-snRNP complex composed of the U4, U6 and U5 snRNAs and at least PRP3, PRP4, PRP6, PRP8, PRP18, PRP31, PRP38, SNU13, SNU23, SNU66, SNU114, SPP381, SMB1, SMD1, SMD2, SMD3, SMX2, SMX3, LSM2, LSM3, LSM4, LSM5, LSM6, LSM7, LSM8, BRR2 and DIB1. Interacts (via C-terminus) with CWC21. Interacts (via N-terminus) with PRP8 (via SCwid domain).

The protein localises to the nucleus. In terms of biological role, component of the U5 snRNP complex required for pre-mRNA splicing. Binds GTP. This chain is Pre-mRNA-splicing factor SNU114 (SNU114), found in Saccharomyces cerevisiae (strain ATCC 204508 / S288c) (Baker's yeast).